The sequence spans 201 residues: Recombination protein RecR (201 aa).

A C4-type zinc finger spans residues 57 to 72; it reads CADCRTFTEQEHCTIC. The region spanning 81-176 is the Toprim domain; the sequence is GQICVVESPA…LASRIAHGVP (96 aa).

It belongs to the RecR family.

In terms of biological role, may play a role in DNA repair. It seems to be involved in an RecBC-independent recombinational process of DNA repair. It may act with RecF and RecO. The polypeptide is Recombination protein RecR (Yersinia enterocolitica serotype O:8 / biotype 1B (strain NCTC 13174 / 8081)).